A 2321-amino-acid polypeptide reads, in one-letter code: Major viral transcription factor ICP4 homolog (2321 aa).

Disordered regions lie at residues 19 to 183 (GIFP…SPPL), 296 to 329 (ILHTNSPTPPTSTSPAPIPSPTQPPACLPSPAPI), 350 to 438 (EFIQ…PSLG), 954 to 1180 (MDDD…SGLA), 1360 to 1392 (DNSSETEKGISSKPSTSPSVLITTSTQTTAPPH), 1597 to 1841 (LLND…PSCY), and 2277 to 2321 (QHEE…TFTD). A compositionally biased stretch (low complexity) spans 114 to 147 (SSNRPGGRNSSNGADESGESSSDRSPSYSPCDSY). 2 stretches are compositionally biased toward pro residues: residues 302-329 (PTPPTSTSPAPIPSPTQPPACLPSPAPI) and 355-367 (QSPPSPPQAPSPP). Positions 368–389 (AHSSSSCSPSHLAPSPLSSSPL) are enriched in low complexity. The span at 390–410 (SSPPQLSPAPVSPPSSPPPLS) shows a compositional bias: pro residues. Composition is skewed to polar residues over residues 424–433 (SISSQPQSCP) and 1002–1011 (PRLTTPSSGR). The segment covering 1031-1093 (PETSPSNEHI…PSSPSSSRSP (63 aa)) has biased composition (low complexity). Residues 1151–1161 (GGGRPRGRPPK) show a composition bias toward basic residues. 2 stretches are compositionally biased toward polar residues: residues 1169–1180 (NDIQVTSSSGLA) and 1371–1389 (SKPSTSPSVLITTSTQTTA). A compositionally biased stretch (low complexity) spans 1630–1644 (STSSSQSASDKSPIK). 2 stretches are compositionally biased toward polar residues: residues 1720–1743 (KAQTDETLPETSTAHPSAMDQSSS) and 1801–1816 (VGQTLLDPTTTTHDIL). Over residues 1817–1839 (SSSLPNRSCSSSPSPSKRPYHPS) the composition is skewed to low complexity.

This sequence belongs to the herpesviridae ICP4 family. In terms of processing, a long stretch of serine residues may be a major site of phosphorylation.

It localises to the host nucleus. In terms of biological role, this IE protein is a multifunctional protein capable of migrating to the nucleus, binding to DNA, trans-activating other viral genes, and autoregulating its own synthesis. It is required for the switch from immediate-early to early mode of gene expression. The sequence is that of Major viral transcription factor ICP4 homolog (MDV084) from Gallus gallus (Chicken).